The chain runs to 758 residues: Amyloid beta precursor protein binding family B member 2 (758 aa).

Position 123 is a phosphoserine (Ser123). The disordered stretch occupies residues 134 to 154 (KLEGKEPHPQDSSSCEILPSQ). At Ser160 the chain carries Phosphoserine. Positions 176 to 190 (EQNRGNHHGTAEEKS) are enriched in basic and acidic residues. Disordered stretches follow at residues 176–195 (EQNR…PVQG), 206–295 (LLLQ…LPPG), and 326–351 (DLQG…KQPW). 2 stretches are compositionally biased toward polar residues: residues 212-230 (NRPQ…SSSP) and 261-275 (SWTT…PSSP). One can recognise a WW domain in the interval 290–322 (PDLPPGWKRVSDIAGTYYWHIPTGTTQWERPVS). Positions 331–340 (RKGSLSSVTP) are enriched in polar residues. Residues Ser334, Ser409, and Ser412 each carry the phosphoserine modification. 2 consecutive PID domains span residues 413 to 578 (DPEA…LQVD) and 584 to 736 (TELV…VTTN).

Interacts (via C-terminus) with APP (via C-terminus). Interacts with APLP2 (via cytoplasmic domain). As to expression, widely expressed.

Its subcellular location is the endoplasmic reticulum. The protein resides in the golgi apparatus. It localises to the early endosome. Plays a role in the maintenance of lens transparency, and may also play a role in muscle cell strength. Involved in hippocampal neurite branching and neuromuscular junction formation, as a result plays a role in spatial memory functioning. Activates transcription of APP. The chain is Amyloid beta precursor protein binding family B member 2 from Homo sapiens (Human).